The following is a 343-amino-acid chain: Ribosomal RNA small subunit methyltransferase C (343 aa).

This sequence belongs to the methyltransferase superfamily. RsmC family. As to quaternary structure, monomer.

It localises to the cytoplasm. It catalyses the reaction guanosine(1207) in 16S rRNA + S-adenosyl-L-methionine = N(2)-methylguanosine(1207) in 16S rRNA + S-adenosyl-L-homocysteine + H(+). Its function is as follows. Specifically methylates the guanine in position 1207 of 16S rRNA in the 30S particle. This is Ribosomal RNA small subunit methyltransferase C from Shigella boydii serotype 4 (strain Sb227).